A 416-amino-acid chain; its full sequence is 5-methylthioadenosine/S-adenosylhomocysteine deaminase 2 (416 aa).

Residues histidine 58 and histidine 60 each coordinate Zn(2+). Substrate is bound by residues glutamate 86 and histidine 178. A Zn(2+)-binding site is contributed by histidine 205. Positions 208 and 293 each coordinate substrate. Residue aspartate 293 coordinates Zn(2+).

It belongs to the metallo-dependent hydrolases superfamily. MTA/SAH deaminase family. Requires Zn(2+) as cofactor.

The catalysed reaction is S-adenosyl-L-homocysteine + H2O + H(+) = S-inosyl-L-homocysteine + NH4(+). It carries out the reaction S-methyl-5'-thioadenosine + H2O + H(+) = S-methyl-5'-thioinosine + NH4(+). In terms of biological role, catalyzes the deamination of 5-methylthioadenosine and S-adenosyl-L-homocysteine into 5-methylthioinosine and S-inosyl-L-homocysteine, respectively. Is also able to deaminate adenosine. The polypeptide is 5-methylthioadenosine/S-adenosylhomocysteine deaminase 2 (Archaeoglobus fulgidus (strain ATCC 49558 / DSM 4304 / JCM 9628 / NBRC 100126 / VC-16)).